Here is a 349-residue protein sequence, read N- to C-terminus: Phenylalanine--tRNA ligase alpha subunit (349 aa).

Glu-258 serves as a coordination point for Mg(2+).

The protein belongs to the class-II aminoacyl-tRNA synthetase family. Phe-tRNA synthetase alpha subunit type 1 subfamily. In terms of assembly, tetramer of two alpha and two beta subunits. Mg(2+) is required as a cofactor.

The protein localises to the cytoplasm. The enzyme catalyses tRNA(Phe) + L-phenylalanine + ATP = L-phenylalanyl-tRNA(Phe) + AMP + diphosphate + H(+). The polypeptide is Phenylalanine--tRNA ligase alpha subunit (Rickettsia africae (strain ESF-5)).